Consider the following 738-residue polypeptide: Ethylene receptor (738 aa).

3 helical membrane-spanning segments follow: residues 22–42, 53–73, and 91–111; these read ISDF…VYFV, VLVQ…INLW, and VLTA…IPDL. Cu cation-binding residues include cysteine 64 and histidine 68. In terms of domain architecture, GAF spans 157 to 305; it reads DRHTILKTTL…VVADQVAVAL (149 aa). Residues 348–585 form the Histidine kinase domain; it reads VMNHEMRTPM…TAIFIVKLGI (238 aa). Histidine 351 is modified (phosphohistidine; by autocatalysis). Residues 613-730 form the Response regulatory domain; sequence KVLIMDDNGF…KMRSVLSELL (118 aa). Aspartate 661 bears the 4-aspartylphosphate mark.

The protein belongs to the ethylene receptor family. Homodimer; disulfide-linked. Cu cation is required as a cofactor. In terms of processing, activation probably requires a transfer of a phosphate group between a His in the transmitter domain and an Asp of the receiver domain.

The protein resides in the endoplasmic reticulum membrane. It carries out the reaction ATP + protein L-histidine = ADP + protein N-phospho-L-histidine.. In terms of biological role, may act early in the ethylene signal transduction pathway, possibly as an ethylene receptor, or as a regulator of the pathway. The sequence is that of Ethylene receptor (ETR1) from Nicotiana tabacum (Common tobacco).